A 114-amino-acid polypeptide reads, in one-letter code: MGIDIKNNTFFLISLGAFLGALFRWQIDEIFIVNLIGCFLLGFFNSLNILKRYKLTLCVGLCGSMTTFSSWMSHLYKLLNQGLYKLFLLNSLSIVLMGVLSIALGHIFAKRLNA.

The next 4 helical transmembrane spans lie at 3-23 (IDIK…GALF), 30-50 (IFIV…LNIL), 55-75 (LTLC…MSHL), and 87-107 (FLLN…LGHI). Residues G63 and T66 each coordinate Na(+).

This sequence belongs to the fluoride channel Fluc/FEX (TC 1.A.43) family.

It localises to the cell inner membrane. The catalysed reaction is fluoride(in) = fluoride(out). With respect to regulation, na(+) is not transported, but it plays an essential structural role and its presence is essential for fluoride channel function. In terms of biological role, fluoride-specific ion channel. Important for reducing fluoride concentration in the cell, thus reducing its toxicity. The chain is Fluoride-specific ion channel FluC 1 from Prochlorococcus marinus (strain NATL2A).